Here is a 677-residue protein sequence, read N- to C-terminus: Nuclear fusion protein FUS2 (677 aa).

Threonine 20 is modified (phosphothreonine). Phosphoserine occurs at positions 67, 72, and 84. Threonine 88 carries the post-translational modification Phosphothreonine. Serine 100 and serine 106 each carry phosphoserine. One can recognise a DH domain in the interval 112–326; sequence KFYKIVQEFY…KYSLFSNKLE (215 aa).

It localises to the cell tip. Functionally, promotes cell fusion during zygote formation. The sequence is that of Nuclear fusion protein FUS2 (FUS2) from Saccharomyces cerevisiae (strain ATCC 204508 / S288c) (Baker's yeast).